Here is a 393-residue protein sequence, read N- to C-terminus: Putative zinc metalloprotease Rip3 (393 aa).

2 consecutive transmembrane segments (helical) span residues 10–30 (IAGF…LFTW) and 45–65 (AVVY…SLLA). Position 66 (histidine 66) interacts with Zn(2+). Residue glutamate 67 is part of the active site. Residue histidine 70 coordinates Zn(2+). Transmembrane regions (helical) follow at residues 77 to 97 (AGVS…ALGG), 108 to 128 (IAFA…ALAI), 136 to 156 (PAIV…LGLF), and 207 to 227 (FVAG…FIFA). 2 consecutive CBS domains span residues 251–308 (MTAQ…RRST) and 315–376 (ALPL…AQPE).

Belongs to the peptidase M50B family. Zn(2+) is required as a cofactor.

Its subcellular location is the cell membrane. This Mycobacterium tuberculosis (strain ATCC 35801 / TMC 107 / Erdman) protein is Putative zinc metalloprotease Rip3 (rip3).